Here is a 290-residue protein sequence, read N- to C-terminus: 4-diphosphocytidyl-2-C-methyl-D-erythritol kinase (290 aa).

Residue K20 is part of the active site. 104–114 is a binding site for ATP; sequence PMGGGLGGGSS. Residue D146 is part of the active site.

This sequence belongs to the GHMP kinase family. IspE subfamily.

The enzyme catalyses 4-CDP-2-C-methyl-D-erythritol + ATP = 4-CDP-2-C-methyl-D-erythritol 2-phosphate + ADP + H(+). It functions in the pathway isoprenoid biosynthesis; isopentenyl diphosphate biosynthesis via DXP pathway; isopentenyl diphosphate from 1-deoxy-D-xylulose 5-phosphate: step 3/6. Catalyzes the phosphorylation of the position 2 hydroxy group of 4-diphosphocytidyl-2C-methyl-D-erythritol. This Shewanella frigidimarina (strain NCIMB 400) protein is 4-diphosphocytidyl-2-C-methyl-D-erythritol kinase.